The chain runs to 293 residues: Urease accessory protein UreD 2 (293 aa).

Belongs to the UreD family. In terms of assembly, ureD, UreF and UreG form a complex that acts as a GTP-hydrolysis-dependent molecular chaperone, activating the urease apoprotein by helping to assemble the nickel containing metallocenter of UreC. The UreE protein probably delivers the nickel.

It is found in the cytoplasm. Its function is as follows. Required for maturation of urease via the functional incorporation of the urease nickel metallocenter. In Streptomyces griseus subsp. griseus (strain JCM 4626 / CBS 651.72 / NBRC 13350 / KCC S-0626 / ISP 5235), this protein is Urease accessory protein UreD 2.